We begin with the raw amino-acid sequence, 419 residues long: UDP-N-acetylglucosamine 1-carboxyvinyltransferase (419 aa).

Phosphoenolpyruvate is bound at residue 22–23 (KN). Residue Arg-93 coordinates UDP-N-acetyl-alpha-D-glucosamine. Cys-117 acts as the Proton donor in catalysis. Cys-117 bears the 2-(S-cysteinyl)pyruvic acid O-phosphothioketal mark. UDP-N-acetyl-alpha-D-glucosamine contacts are provided by residues 122 to 126 (RPVDL), Asp-308, and Ile-330.

The protein belongs to the EPSP synthase family. MurA subfamily.

Its subcellular location is the cytoplasm. It catalyses the reaction phosphoenolpyruvate + UDP-N-acetyl-alpha-D-glucosamine = UDP-N-acetyl-3-O-(1-carboxyvinyl)-alpha-D-glucosamine + phosphate. The protein operates within cell wall biogenesis; peptidoglycan biosynthesis. Its function is as follows. Cell wall formation. Adds enolpyruvyl to UDP-N-acetylglucosamine. The polypeptide is UDP-N-acetylglucosamine 1-carboxyvinyltransferase (Pseudomonas putida (Arthrobacter siderocapsulatus)).